The chain runs to 343 residues: Anthranilate phosphoribosyltransferase (343 aa).

5-phospho-alpha-D-ribose 1-diphosphate contacts are provided by residues glycine 84, glycine 87–aspartate 88, threonine 92, asparagine 94–threonine 97, lysine 112–serine 120, and serine 124. Anthranilate is bound at residue glycine 84. Serine 96 contacts Mg(2+). Asparagine 115 contributes to the anthranilate binding site. Arginine 170 lines the anthranilate pocket. Positions 229 and 230 each coordinate Mg(2+).

Belongs to the anthranilate phosphoribosyltransferase family. Homodimer. Mg(2+) is required as a cofactor.

It carries out the reaction N-(5-phospho-beta-D-ribosyl)anthranilate + diphosphate = 5-phospho-alpha-D-ribose 1-diphosphate + anthranilate. It functions in the pathway amino-acid biosynthesis; L-tryptophan biosynthesis; L-tryptophan from chorismate: step 2/5. In terms of biological role, catalyzes the transfer of the phosphoribosyl group of 5-phosphorylribose-1-pyrophosphate (PRPP) to anthranilate to yield N-(5'-phosphoribosyl)-anthranilate (PRA). The protein is Anthranilate phosphoribosyltransferase of Burkholderia ambifaria (strain ATCC BAA-244 / DSM 16087 / CCUG 44356 / LMG 19182 / AMMD) (Burkholderia cepacia (strain AMMD)).